A 258-amino-acid chain; its full sequence is MAGSPLLCGPRAGGVGILVLLLLGLLRLPPTLSARPVKEPRSLSAASAPLVETSTPLRLRRAVPRGEAAGAVQELARALAHLLEAERQERARAEAQEAEDQQARVLAQLLRAWGSPRASDPPLAPDDDPDAPAAQLARALLRARLDPAALAAQLVPAPAAAPRPRPPVYDDGPTGPDVEDAGDETPDVDPELLRYLLGRILTGSSEPEAAPAPRRLRRSVDQDLGPEVPPENVLGALLRVKRLENPSPQAPARRLLPP.

An N-terminal signal peptide occupies residues 1–33 (MAGSPLLCGPRAGGVGILVLLLLGLLRLPPTLS). The tract at residues 34–213 (ARPVKEPRSL…SSEPEAAPAP (180 aa)) is proSAAS(1-180). Disordered stretches follow at residues 156–188 (PAPAAAPRPRPPVYDDGPTGPDVEDAGDETPDV), 204–230 (SSEPEAAPAPRRLRRSVDQDLGPEVPP), and 239–258 (RVKRLENPSPQAPARRLLPP). A compositionally biased stretch (acidic residues) spans 177-188 (DVEDAGDETPDV). Positions 204-213 (SSEPEAAPAP) are enriched in low complexity. A C-terminal inhibitory domain; interacts with PCSK1 region spans residues 219 to 258 (SVDQDLGPEVPPENVLGALLRVKRLENPSPQAPARRLLPP). The short motif at 237-242 (LLRVKR) is the Sufficient for inhibition of PCSK1 element.

In terms of assembly, interacts via the C-terminal inhibitory domain with PCSK1 66 kDa form. Proteolytically cleaved in the Golgi. Little SAAS, PEN, PEN-20 and Big LEN are the major processed peptides in proSAAS-overexpressing AtT-20 pituitary corticotropic cell line. Expressed in brain (mostly hypothalamus and pituitary) and gut. Expressed in trigeminal ganglia and neuroendocrine cell lines. In terms of tissue distribution, expressed in pancreas, spinal cord and brain (most abundant in striatum, hippocampus, pons and medulla, and cortex) (at protein level).

It is found in the secreted. It localises to the golgi apparatus. The protein localises to the trans-Golgi network. Its function is as follows. May function in the control of the neuroendocrine secretory pathway. Proposed be a specific endogenous inhibitor of PCSK1. ProSAAS and Big PEN-LEN, both containing the C-terminal inhibitory domain, but not the processed peptides reduce PCSK1 activity in the endoplasmic reticulum and Golgi. It reduces the activity of the 87 kDa form but not the autocatalytically derived 66 kDa form of PCSK1. Subsequent processing of proSAAS may eliminate the inhibition. Slows down convertase-mediated processing of proopiomelanocortin and proenkephalin. May control the intracellular timing of PCSK1 rather than its total level of activity. In terms of biological role, endogenous ligand for GPR171. Neuropeptide involved in the regulation of feeding. Functionally, endogenous ligand for GPR171. Neuropeptide involved in the regulation of feeding. The chain is ProSAAS (Pcsk1n) from Mus musculus (Mouse).